The following is a 512-amino-acid chain: Cytochrome P450 26B1 (512 aa).

Cys441 serves as a coordination point for heme.

It belongs to the cytochrome P450 family. Heme serves as cofactor.

It is found in the endoplasmic reticulum membrane. Its subcellular location is the microsome membrane. It catalyses the reaction all-trans-retinoate + reduced [NADPH--hemoprotein reductase] + O2 = all-trans-4-hydroxyretinoate + oxidized [NADPH--hemoprotein reductase] + H2O + H(+). The catalysed reaction is all-trans-retinoate + reduced [NADPH--hemoprotein reductase] + O2 = all-trans-18-hydroxyretinoate + oxidized [NADPH--hemoprotein reductase] + H2O + H(+). Its function is as follows. A cytochrome P450 monooxygenase involved in the metabolism of retinoates (RAs), the active metabolites of vitamin A, and critical signaling molecules in animals. RAs exist as at least four different isomers: all-trans-RA (atRA), 9-cis-RA, 13-cis-RA, and 9,13-dicis-RA, where atRA is considered to be the biologically active isomer, although 9-cis-RA and 13-cis-RA also have activity. Catalyzes the hydroxylation of atRA primarily at C-4 and C-18, thereby contributing to the regulation of atRA homeostasis and signaling. Hydroxylation of atRA limits its biological activity and initiates a degradative process leading to its eventual elimination. Involved in the convertion of atRA to all-trans-4-oxo-RA. Can oxidize all-trans-13,14-dihydroretinoate (DRA) to metabolites which could include all-trans-4-oxo-DRA, all-trans-4-hydroxy-DRA, all-trans-5,8-epoxy-DRA, and all-trans-18-hydroxy-DRA. Shows preference for the following substrates: atRA &gt; 9-cis-RA &gt; 13-cis-RA. Plays a central role in germ cell development: acts by degrading RAs in the developing testis, preventing STRA8 expression, thereby leading to delay of meiosis. Required for the maintenance of the undifferentiated state of male germ cells during embryonic development in Sertoli cells, inducing arrest in G0 phase of the cell cycle and preventing meiotic entry. Plays a role in skeletal development, both at the level of patterning and in the ossification of bone and the establishment of some synovial joints. Essential for postnatal survival. Functionally, also has a significant activity in oxidation of tazarotenic acid and may therefore metabolize that xenobiotic in vivo. The polypeptide is Cytochrome P450 26B1 (CYP26B1) (Bos taurus (Bovine)).